Here is a 456-residue protein sequence, read N- to C-terminus: MVSLMFFSSASPLCSSPSKIPKASLDFEMKKLGGSTKLVRNVNLEKLKNNYLFPEINRRELEHIEKHPNVQLISLGTGDTTEPIPEQITSHMSNFAHGLSTVEGYRGYGLEQGNKTLRKAIAETFYRDLHVKSNEVFVSDGAQSDISRLQLLLGSNVTIAVQDPTFPAYIDSSVIIGQTGHFHEKTKKYQNVVYMPCGPNNSFFPDLAMTPRTDVIFFCSPNNPTGYVASRKQLHQLVDFAKTNGSIIIFDSAYAAFIEDGSPRSIYEIPGAREVAIEVSSFSKFAGFTGVRLGWSIIPDELLYSNGFPIINDFHRIVTTSFNGASNIAQAGGLACLSSGGLKEIRSVNNYYKENRKILMDTLVSLGLKVYGGVNAPYLWVHFKGSKSWDVFNEILENTHIITVPGSGFGPGGEEYLRISGFGRRDHIVEASKRLQNFFNTRTKHFTYLSSTSNTN.

A chloroplast-targeting transit peptide spans 1 to 43; it reads MVSLMFFSSASPLCSSPSKIPKASLDFEMKKLGGSTKLVRNVN. Residues Tyr-108, 142–143, Asn-223, Asp-251, Tyr-254, Ser-281, Ser-283, Arg-292, and Asn-323 each bind pyridoxal 5'-phosphate; that span reads AQ.

Belongs to the class-I pyridoxal-phosphate-dependent aminotransferase family. LL-diaminopimelate aminotransferase subfamily. Pyridoxal 5'-phosphate is required as a cofactor. Highly expressed in senescing leaves, flowers, siliques and seeds.

The protein localises to the plastid. Its subcellular location is the chloroplast. Functionally, aminotransferase involved in local and systemic acquired resistance (SAR) to the bacterial pathogen P.syringae. Required for salicylic acid (SA) and camalexin accumulation upon pathogen infection. Possesses aminotransferase activity in vitro and may generate amino-acid-derived defense signals in vivo. May be involved in ethylene-induced senescence signaling. Involved in the biosynthesis of pipecolate (Pip), a metabolite that orchestrates defense amplification, positive regulation of SA biosynthesis, and priming to guarantee effective local resistance induction and the establishment of SAR. Converts lysine to alpha-keto-epsilon-aminocaproate, which then can spontaneously cyclize to form delta-(1)-piperideine-2-carboxylate (P2C). P2C is converted to Pip by SARD4. May produce non-Pip metabolites that play roles in immunity. Involved in the synthesis of distinct metabolite signals that affect basal and early defenses, and later defense responses. This is Aminotransferase ALD1, chloroplastic from Arabidopsis thaliana (Mouse-ear cress).